A 123-amino-acid chain; its full sequence is Large ribosomal subunit protein uL29 (123 aa).

This sequence belongs to the universal ribosomal protein uL29 family.

The chain is Large ribosomal subunit protein uL29 (RPL35) from Babesia bovis.